The following is a 328-amino-acid chain: MKINLDRTSSGFCIGVQGTIHVAEEKLNNPDKLFSLGDVVHNEAEVNRLEHLGLTTIDESGFHELKNAQLLIRAHGEPPSTYRIAEKNNLVITDTTCPVVSRLQRTARLLHELGYQIIIYGKPSHPEVIGINGHCKNSAVIIKHPDLSDPSETGQIDLKRKTALISQTTMDVPGFYELKANIRNLFAADSEEIRNENDHLWMAIRDIDLTASLTGIRDMPRYVYKDTICRQVSSRNQMLHDFAIANSCVIFVAGKKSSNGQVLFGICKAANPCTYFIEDIDEIDDAWLTGSDGRTVESVGICGATSTPMWLLEKVAAHLQRRYNHDPA.

Cysteine 13 contributes to the [4Fe-4S] cluster binding site. The (2E)-4-hydroxy-3-methylbut-2-enyl diphosphate site is built by histidine 41 and histidine 75. Residues histidine 41 and histidine 75 each contribute to the dimethylallyl diphosphate site. Isopentenyl diphosphate contacts are provided by histidine 41 and histidine 75. Cysteine 97 provides a ligand contact to [4Fe-4S] cluster. A (2E)-4-hydroxy-3-methylbut-2-enyl diphosphate-binding site is contributed by histidine 125. Histidine 125 contributes to the dimethylallyl diphosphate binding site. Histidine 125 contacts isopentenyl diphosphate. Residue glutamate 127 is the Proton donor of the active site. (2E)-4-hydroxy-3-methylbut-2-enyl diphosphate is bound at residue threonine 168. Cysteine 229 is a binding site for [4Fe-4S] cluster. The (2E)-4-hydroxy-3-methylbut-2-enyl diphosphate site is built by serine 257, serine 258, asparagine 259, and serine 306. The dimethylallyl diphosphate site is built by serine 257, serine 258, asparagine 259, and serine 306. 4 residues coordinate isopentenyl diphosphate: serine 257, serine 258, asparagine 259, and serine 306.

Belongs to the IspH family. [4Fe-4S] cluster serves as cofactor.

It carries out the reaction isopentenyl diphosphate + 2 oxidized [2Fe-2S]-[ferredoxin] + H2O = (2E)-4-hydroxy-3-methylbut-2-enyl diphosphate + 2 reduced [2Fe-2S]-[ferredoxin] + 2 H(+). The catalysed reaction is dimethylallyl diphosphate + 2 oxidized [2Fe-2S]-[ferredoxin] + H2O = (2E)-4-hydroxy-3-methylbut-2-enyl diphosphate + 2 reduced [2Fe-2S]-[ferredoxin] + 2 H(+). Its pathway is isoprenoid biosynthesis; dimethylallyl diphosphate biosynthesis; dimethylallyl diphosphate from (2E)-4-hydroxy-3-methylbutenyl diphosphate: step 1/1. It participates in isoprenoid biosynthesis; isopentenyl diphosphate biosynthesis via DXP pathway; isopentenyl diphosphate from 1-deoxy-D-xylulose 5-phosphate: step 6/6. In terms of biological role, catalyzes the conversion of 1-hydroxy-2-methyl-2-(E)-butenyl 4-diphosphate (HMBPP) into a mixture of isopentenyl diphosphate (IPP) and dimethylallyl diphosphate (DMAPP). Acts in the terminal step of the DOXP/MEP pathway for isoprenoid precursor biosynthesis. This Chlorobium phaeobacteroides (strain DSM 266 / SMG 266 / 2430) protein is 4-hydroxy-3-methylbut-2-enyl diphosphate reductase.